The sequence spans 304 residues: Non-specific ribonucleoside hydrolase RihC (304 aa).

The active site involves His-233.

Belongs to the IUNH family. RihC subfamily.

In terms of biological role, hydrolyzes both purine and pyrimidine ribonucleosides with a broad-substrate specificity. The protein is Non-specific ribonucleoside hydrolase RihC of Escherichia coli O7:K1 (strain IAI39 / ExPEC).